Consider the following 267-residue polypeptide: Hydroxyacylglutathione hydrolase (267 aa).

Zn(2+)-binding residues include H55, H57, D59, H60, H121, D138, and H176.

The protein belongs to the metallo-beta-lactamase superfamily. Glyoxalase II family. Monomer. Zn(2+) serves as cofactor.

The catalysed reaction is an S-(2-hydroxyacyl)glutathione + H2O = a 2-hydroxy carboxylate + glutathione + H(+). Its pathway is secondary metabolite metabolism; methylglyoxal degradation; (R)-lactate from methylglyoxal: step 2/2. Thiolesterase that catalyzes the hydrolysis of S-D-lactoyl-glutathione to form glutathione and D-lactic acid. This chain is Hydroxyacylglutathione hydrolase, found in Shewanella oneidensis (strain ATCC 700550 / JCM 31522 / CIP 106686 / LMG 19005 / NCIMB 14063 / MR-1).